Consider the following 117-residue polypeptide: uncharacterized protein (117 aa).

An N-terminal signal peptide occupies residues 1–24 (MMTEFGSAMTLVTGLVAYGAYVKS). The interval 42 to 117 (EKENFNYNNN…NNQIKRRLFD (76 aa)) is disordered. The span at 46–95 (FNYNNNNNNNNNNNNNNSNNNDNNNNNNSNSNNNNNNNNNNNNNNNNNIN) shows a compositional bias: low complexity. N-linked (GlcNAc...) asparagine glycosylation is found at Asn-61 and Asn-72. Residues 96-110 (DKQINGTNIFDSNNQ) show a composition bias toward polar residues.

Its subcellular location is the secreted. This is an uncharacterized protein from Dictyostelium discoideum (Social amoeba).